The primary structure comprises 669 residues: Putative transcription factor SOX-14 (669 aa).

Over residues 1 to 12 (MIAKPNQATTEP) the composition is skewed to polar residues. Disordered regions lie at residues 1–149 (MIAK…EMTL), 254–336 (YKYR…PKYE), and 419–439 (SSLT…MDNI). The segment covering 17 to 37 (RPGTVPTVPATTPARPATITI) has biased composition (low complexity). A compositionally biased stretch (pro residues) spans 52 to 71 (TLPPFSPSPSPASSPSPAPA). Positions 75–84 (GAQKTQSQAA) are enriched in polar residues. Over residues 88 to 105 (PAAVASPSAPVAAAAPKT) the composition is skewed to low complexity. Basic and acidic residues predominate over residues 130-145 (RESEMDGERSPSHSGH). Residues 187 to 255 (IKRPMNAFMV…LHMIEYPNYK (69 aa)) constitute a DNA-binding region (HMG box). Over residues 284 to 294 (TTNNNNSLTTL) the composition is skewed to low complexity. Over residues 295–318 (AINGTTTAGRKSKRSTSTCQSGSA) the composition is skewed to polar residues. The segment covering 322–336 (LRNDSGDTSSKPKYE) has biased composition (basic and acidic residues). Residues 419-431 (SSLTQSQHNQSDP) are compositionally biased toward polar residues.

Its subcellular location is the nucleus. The chain is Putative transcription factor SOX-14 (Sox14) from Drosophila melanogaster (Fruit fly).